We begin with the raw amino-acid sequence, 287 residues long: Coatomer subunit epsilon-1 (287 aa).

It belongs to the COPE family. As to quaternary structure, oligomeric complex that consists of at least the alpha, beta, beta', gamma, delta, epsilon and zeta subunits.

Its subcellular location is the cytoplasm. The protein localises to the golgi apparatus membrane. The protein resides in the cytoplasmic vesicle. It localises to the COPI-coated vesicle membrane. Its function is as follows. The coatomer is a cytosolic protein complex that binds to dilysine motifs and reversibly associates with Golgi non-clathrin-coated vesicles, which further mediate biosynthetic protein transport from the ER, via the Golgi up to the trans Golgi network. The coatomer complex is required for budding from Golgi membranes, and is essential for the retrograde Golgi-to-ER transport of dilysine-tagged proteins. In Oryza sativa subsp. japonica (Rice), this protein is Coatomer subunit epsilon-1 (COPE1).